The primary structure comprises 498 residues: Cytochrome P450 71D15 (498 aa).

The chain crosses the membrane as a helical; Signal-anchor for type II membrane protein span at residues leucine 3–isoleucine 23. Cysteine 437 serves as a coordination point for heme.

It belongs to the cytochrome P450 family. Requires heme as cofactor.

It localises to the endoplasmic reticulum membrane. It carries out the reaction (4S)-limonene + reduced [NADPH--hemoprotein reductase] + O2 = (1S,6R)-isopiperitenol + oxidized [NADPH--hemoprotein reductase] + H2O + H(+). Functionally, hydroxylates (-)-(4S)-limonene to (-)-trans-isopiperitenol, a precursor of (-)-menthol, responsible for the cooling sensation of peppermint. Fluorinated substrate analogs are hydroxylated with the same regio- and stereochemistry. This chain is Cytochrome P450 71D15 (CYP71D15), found in Mentha piperita (Peppermint).